The primary structure comprises 154 residues: Movement protein (154 aa).

Disordered stretches follow at residues 83-103 and 123-154; these read SSPT…HTRP and WVAT…GRVR.

It belongs to the luteoviruses movement protein family.

Its function is as follows. Transports viral genome to neighboring plant cells directly through plasmosdesmata, without any budding. The movement protein allows efficient cell to cell propagation, by bypassing the host cell wall barrier. This is Movement protein from Barley yellow dwarf virus (isolate MAV) (BYDV).